The following is a 239-amino-acid chain: Prolyl hydroxylase EGLN3 (239 aa).

The interval 62–73 (AGPRAGVSKRHL) is beta(2)beta(3) 'finger-like' loop. The interval 88–104 (CEAINFLLSLIDRLVLY) is required for interaction with ADRB2. A Fe2OG dioxygenase domain is found at 116–214 (ERSKAMVACY…RYAMTVWYFD (99 aa)). Fe cation-binding residues include His-135, Asp-137, and His-196. Arg-205 contacts 2-oxoglutarate.

In terms of assembly, interacts with ADRB2; the interaction hydroxylates ADRB2 facilitating its ubiquitination by the VHL-E3 ligase complex. Interacts with PAX2; the interaction targets PAX2 for destruction. Interacts with PKM; the interaction hydroxylates PKM in hypoxia. Interacts with WDR83; the interaction leads to almost complete elimination of HIF-mediated reporter activity. Interacts with BCL2 (via its BH4 domain); the interaction disrupts the BAX-BCL4 complex inhibiting the anti-apoptotic activity of BCL2. It depends on Fe(2+) as a cofactor. L-ascorbate is required as a cofactor. In terms of processing, ubiquitinated by SIAH1 and/or SIAH2 in response to the unfolded protein response (UPR), leading to its degradation. In terms of tissue distribution, highly expressed in vascular smooth muscle. Moderately expressed in esophagus, stomach, small bowel and aorta. Low levels in tail and kidney. Expression also in pheochromocytoma cell line PC-12.

It is found in the nucleus. It localises to the cytoplasm. The enzyme catalyses L-prolyl-[protein] + 2-oxoglutarate + O2 = trans-4-hydroxy-L-prolyl-[protein] + succinate + CO2. It carries out the reaction L-prolyl-[hypoxia-inducible factor alpha subunit] + 2-oxoglutarate + O2 = trans-4-hydroxy-L-prolyl-[hypoxia-inducible factor alpha subunit] + succinate + CO2. Functionally, prolyl hydroxylase that mediates hydroxylation of proline residues in target proteins, such as PKM, TELO2, ATF4 and HIF1A. Target proteins are preferentially recognized via a LXXLAP motif. Cellular oxygen sensor that catalyzes, under normoxic conditions, the post-translational formation of 4-hydroxyproline in hypoxia-inducible factor (HIF) alpha proteins. Hydroxylates a specific proline found in each of the oxygen-dependent degradation (ODD) domains (N-terminal, NODD, and C-terminal, CODD) of HIF1A. Also hydroxylates HIF2A. Has a preference for the CODD site for both HIF1A and HIF2A. Hydroxylation on the NODD site by EGLN3 appears to require prior hydroxylation on the CODD site. Hydroxylated HIFs are then targeted for proteasomal degradation via the von Hippel-Lindau ubiquitination complex. Under hypoxic conditions, the hydroxylation reaction is attenuated allowing HIFs to escape degradation resulting in their translocation to the nucleus, heterodimerization with HIF1B, and increased expression of hypoxy-inducible genes. ELGN3 is the most important isozyme in limiting physiological activation of HIFs (particularly HIF2A) in hypoxia. Also hydroxylates PKM in hypoxia, limiting glycolysis. Under normoxia, hydroxylates and regulates the stability of ADRB2. Regulator of cardiomyocyte and neuronal apoptosis. In cardiomyocytes, inhibits the anti-apoptotic effect of BCL2 by disrupting the BAX-BCL2 complex. In neurons, has a NGF-induced proapoptotic effect, probably through regulating CASP3 activity. Also essential for hypoxic regulation of neutrophilic inflammation. Plays a crucial role in DNA damage response (DDR) by hydroxylating TELO2, promoting its interaction with ATR which is required for activation of the ATR/CHK1/p53 pathway. Also mediates hydroxylation of ATF4, leading to decreased protein stability of ATF4. This is Prolyl hydroxylase EGLN3 (Egln3) from Rattus norvegicus (Rat).